Reading from the N-terminus, the 156-residue chain is MRSSAKQEELVKAFKALLKEEKFSSQGEIVQALQEEGFENINQSKVSRMLTKFGAVRTRNAKMEMVYCLPAELGVPTTSSPLKNLVLDIDYNDAVVVIHTSPGAAQLIARLLDSLGKAEGILGSIAGDDTIFTTPARGFTVKDLHDAILVLFEQEL.

The protein belongs to the ArgR family.

It is found in the cytoplasm. The protein operates within amino-acid biosynthesis; L-arginine biosynthesis [regulation]. Regulates arginine biosynthesis genes. This chain is Arginine repressor, found in Klebsiella pneumoniae (strain 342).